The primary structure comprises 311 residues: N-acetylmuramic acid 6-phosphate etherase (311 aa).

Residues 66-229 (VADRMARGGR…STITMIRLGK (164 aa)) enclose the SIS domain. E94 acts as the Proton donor in catalysis. The active site involves E125.

It belongs to the GCKR-like family. MurNAc-6-P etherase subfamily. In terms of assembly, homodimer.

It catalyses the reaction N-acetyl-D-muramate 6-phosphate + H2O = N-acetyl-D-glucosamine 6-phosphate + (R)-lactate. The protein operates within amino-sugar metabolism; N-acetylmuramate degradation. Its function is as follows. Specifically catalyzes the cleavage of the D-lactyl ether substituent of MurNAc 6-phosphate, producing GlcNAc 6-phosphate and D-lactate. The chain is N-acetylmuramic acid 6-phosphate etherase from Streptomyces avermitilis (strain ATCC 31267 / DSM 46492 / JCM 5070 / NBRC 14893 / NCIMB 12804 / NRRL 8165 / MA-4680).